The chain runs to 608 residues: Chaperone protein HtpG (608 aa).

Residues 1-332 (MQFQTEVNQL…VEDLPLNVSR (332 aa)) form an a; substrate-binding region. Residues 333-536 (EILQENQILK…KNKPDFAMQQ (204 aa)) form a b region. Residues 537–608 (LLKQMGQEQN…LTKIINKAFS (72 aa)) are c.

The protein belongs to the heat shock protein 90 family. In terms of assembly, homodimer.

It localises to the cytoplasm. Functionally, molecular chaperone. Has ATPase activity. The protein is Chaperone protein HtpG of Campylobacter jejuni subsp. jejuni serotype O:6 (strain 81116 / NCTC 11828).